Consider the following 334-residue polypeptide: Holliday junction branch migration complex subunit RuvB (334 aa).

The interval 4 to 184 (ADRIISASPK…FGIVQRLEFY (181 aa)) is large ATPase domain (RuvB-L). ATP is bound by residues Ile-23, Arg-24, Gly-65, Lys-68, Thr-69, Thr-70, 131–133 (EDY), Arg-174, Tyr-184, and Arg-221. Mg(2+) is bound at residue Thr-69. The tract at residues 185-255 (SVDDLTSIVK…IAKQALAMLD (71 aa)) is small ATPAse domain (RuvB-S). Residues 258 to 334 (SEGFDFMDIK…YAHLGIAKLD (77 aa)) form a head domain (RuvB-H) region. Residues Arg-294, Arg-313, and Arg-318 each coordinate DNA.

It belongs to the RuvB family. Homohexamer. Forms an RuvA(8)-RuvB(12)-Holliday junction (HJ) complex. HJ DNA is sandwiched between 2 RuvA tetramers; dsDNA enters through RuvA and exits via RuvB. An RuvB hexamer assembles on each DNA strand where it exits the tetramer. Each RuvB hexamer is contacted by two RuvA subunits (via domain III) on 2 adjacent RuvB subunits; this complex drives branch migration. In the full resolvosome a probable DNA-RuvA(4)-RuvB(12)-RuvC(2) complex forms which resolves the HJ.

It is found in the cytoplasm. It carries out the reaction ATP + H2O = ADP + phosphate + H(+). Functionally, the RuvA-RuvB-RuvC complex processes Holliday junction (HJ) DNA during genetic recombination and DNA repair, while the RuvA-RuvB complex plays an important role in the rescue of blocked DNA replication forks via replication fork reversal (RFR). RuvA specifically binds to HJ cruciform DNA, conferring on it an open structure. The RuvB hexamer acts as an ATP-dependent pump, pulling dsDNA into and through the RuvAB complex. RuvB forms 2 homohexamers on either side of HJ DNA bound by 1 or 2 RuvA tetramers; 4 subunits per hexamer contact DNA at a time. Coordinated motions by a converter formed by DNA-disengaged RuvB subunits stimulates ATP hydrolysis and nucleotide exchange. Immobilization of the converter enables RuvB to convert the ATP-contained energy into a lever motion, pulling 2 nucleotides of DNA out of the RuvA tetramer per ATP hydrolyzed, thus driving DNA branch migration. The RuvB motors rotate together with the DNA substrate, which together with the progressing nucleotide cycle form the mechanistic basis for DNA recombination by continuous HJ branch migration. Branch migration allows RuvC to scan DNA until it finds its consensus sequence, where it cleaves and resolves cruciform DNA. This is Holliday junction branch migration complex subunit RuvB from Actinobacillus pleuropneumoniae serotype 5b (strain L20).